A 156-amino-acid chain; its full sequence is UPF0232 protein BL0636 (156 aa).

This sequence belongs to the UPF0232 family.

The polypeptide is UPF0232 protein BL0636 (Bifidobacterium longum (strain NCC 2705)).